We begin with the raw amino-acid sequence, 883 residues long: Serine/threonine-protein kinase greatwall (883 aa).

Methionine 1 carries the N-acetylmethionine modification. The Protein kinase domain maps to 35 to 839 (FTIVKPISRG…IKELKCHPLF (805 aa)). ATP contacts are provided by residues 41–49 (ISRGAFGKV) and lysine 62. The Proton acceptor role is filled by aspartate 156. 2 positions are modified to phosphothreonine: threonine 209 and threonine 224. Phosphoserine is present on residues serine 295, serine 373, and serine 456. Threonine 523 is modified (phosphothreonine). Residues serine 555, serine 559, serine 634, serine 661, and serine 672 each carry the phosphoserine modification. Threonine 726 is subject to Phosphothreonine. Serine 729 bears the Phosphoserine mark. At threonine 745 the chain carries Phosphothreonine; by CDK1. The AGC-kinase C-terminal domain occupies 840–883 (SDVDWENLQHQTMPFIPQPDDETDTSYFEARNNAQHLTVSGFSL). Phosphoserine occurs at positions 879 and 882.

The protein belongs to the protein kinase superfamily. AGC Ser/Thr protein kinase family. In terms of processing, phosphorylation at Thr-745 by CDK1 during M phase activates its kinase activity. Maximum phosphorylation occurs in prometaphase.

It localises to the cytoplasm. The protein resides in the cytoskeleton. It is found in the microtubule organizing center. Its subcellular location is the centrosome. The protein localises to the nucleus. It catalyses the reaction L-seryl-[protein] + ATP = O-phospho-L-seryl-[protein] + ADP + H(+). The catalysed reaction is L-threonyl-[protein] + ATP = O-phospho-L-threonyl-[protein] + ADP + H(+). Its function is as follows. Serine/threonine kinase that plays a key role in M phase by acting as a regulator of mitosis entry and maintenance. Acts by promoting the inactivation of protein phosphatase 2A (PP2A) during M phase: does not directly inhibit PP2A but acts by mediating phosphorylation and subsequent activation of ARPP19 and ENSA at 'Ser-62' and 'Ser-67', respectively. ARPP19 and ENSA are phosphatase inhibitors that specifically inhibit the PPP2R2D (PR55-delta) subunit of PP2A. Inactivation of PP2A during M phase is essential to keep cyclin-B1-CDK1 activity high. Following DNA damage, it is also involved in checkpoint recovery by being inhibited. The chain is Serine/threonine-protein kinase greatwall (MASTL) from Canis lupus familiaris (Dog).